Consider the following 143-residue polypeptide: Large ribosomal subunit protein uL13 (143 aa).

The protein belongs to the universal ribosomal protein uL13 family. Part of the 50S ribosomal subunit.

In terms of biological role, this protein is one of the early assembly proteins of the 50S ribosomal subunit, although it is not seen to bind rRNA by itself. It is important during the early stages of 50S assembly. This is Large ribosomal subunit protein uL13 from Albidiferax ferrireducens (strain ATCC BAA-621 / DSM 15236 / T118) (Rhodoferax ferrireducens).